The primary structure comprises 292 residues: Techylectin-5A (292 aa).

The N-terminal stretch at 1–23 (MHNLRNILFVITLIGQKYGLTSS) is a signal peptide. Pyrrolidone carboxylic acid is present on glutamine 24. Positions 63 to 286 (PIVSPDPTDC…QVEMKIRPVE (224 aa)) constitute a Fibrinogen C-terminal domain. Cysteines 72 and 103 form a disulfide. Residues asparagine 173, asparagine 198, and asparagine 214 are each glycosylated (N-linked (GlcNAc...) asparagine). Aspartate 221, histidine 225, and threonine 227 together coordinate Ca(2+). The cysteines at positions 229 and 242 are disulfide-linked.

In terms of assembly, multimeric. PubMed:10468566 and PubMed:11707569 are in disagreement about the nature of the multimer, PubMed:10468566 finds hexamers and octamers, the results in PubMed:11707569 suggest tetramers. As to expression, strongly expressed in heart and intestine, weakly expressed in hepatopancreas. Not found in hemocytes, stomach, nervous tissue or skeletal muscle.

It is found in the secreted. Lectin involved in innate immunity. Agglutinates all types of human erythrocytes, Gram-positive and Gram-negative bacteria. Has a stronger agglutinating activity towards Gram-negative bacteria than towards Gram-positive bacteria. Specifically recognizes acetyl group-containing substances on agglutinated cells. The hemagglutinating activity was inhibited by EDTA, acetyl group-containing mono- and disaccharides, N-acetyl derivatives of amino acids, other acetyl group-containing substances, propionamide and benzamide. Enhances the antimicrobial activity of big defensin against Gram-positive bacteria but not against Gram-negative bacteria. The protein is Techylectin-5A of Tachypleus tridentatus (Japanese horseshoe crab).